The primary structure comprises 506 residues: UDP-N-acetylmuramoyl-L-alanyl-D-glutamate--2,6-diaminopimelate ligase (506 aa).

Ser-38 contacts UDP-N-acetyl-alpha-D-muramoyl-L-alanyl-D-glutamate. An ATP-binding site is contributed by 124–130 (GTNGKTS). UDP-N-acetyl-alpha-D-muramoyl-L-alanyl-D-glutamate contacts are provided by residues 166–167 (TT), Ser-193, and Arg-201. Residue Lys-233 is modified to N6-carboxylysine. Residues Arg-401, 425 to 428 (DNPR), Gly-477, and Glu-481 each bind meso-2,6-diaminopimelate. A Meso-diaminopimelate recognition motif motif is present at residues 425 to 428 (DNPR).

The protein belongs to the MurCDEF family. MurE subfamily. Mg(2+) is required as a cofactor. In terms of processing, carboxylation is probably crucial for Mg(2+) binding and, consequently, for the gamma-phosphate positioning of ATP.

It is found in the cytoplasm. It carries out the reaction UDP-N-acetyl-alpha-D-muramoyl-L-alanyl-D-glutamate + meso-2,6-diaminopimelate + ATP = UDP-N-acetyl-alpha-D-muramoyl-L-alanyl-gamma-D-glutamyl-meso-2,6-diaminopimelate + ADP + phosphate + H(+). Its pathway is cell wall biogenesis; peptidoglycan biosynthesis. Catalyzes the addition of meso-diaminopimelic acid to the nucleotide precursor UDP-N-acetylmuramoyl-L-alanyl-D-glutamate (UMAG) in the biosynthesis of bacterial cell-wall peptidoglycan. This Leptospira interrogans serogroup Icterohaemorrhagiae serovar copenhageni (strain Fiocruz L1-130) protein is UDP-N-acetylmuramoyl-L-alanyl-D-glutamate--2,6-diaminopimelate ligase.